The chain runs to 563 residues: Delta-1-pyrroline-5-carboxylate dehydrogenase, mitochondrial (563 aa).

The N-terminal 24 residues, 1 to 24 (MLLRSAALCRALLARRGRAAGLCR), are a transit peptide targeting the mitochondrion. Serine 44 is modified (phosphoserine). Lysine 52 carries the post-translational modification N6-acetyllysine. An N6-acetyllysine; alternate mark is found at lysine 93, lysine 99, lysine 114, lysine 130, and lysine 175. N6-succinyllysine; alternate occurs at positions 93, 99, 114, 130, and 175. NAD(+) contacts are provided by residues serine 208, lysine 233, and 286–290 (GSVPT). The Proton acceptor role is filled by glutamate 314. An N6-acetyllysine modification is found at lysine 318. N6-succinyllysine is present on lysine 347. The active-site Nucleophile is cysteine 348. Residues lysine 365 and lysine 376 each carry the N6-acetyllysine modification. Lysine 395 is modified (N6-succinyllysine). Residue glutamate 447 coordinates NAD(+). At lysine 509 the chain carries N6-acetyllysine; alternate. Lysine 509 is modified (N6-succinyllysine; alternate). Substrate is bound at residue serine 513. The residue at position 531 (lysine 531) is an N6-acetyllysine.

The protein belongs to the aldehyde dehydrogenase family. In terms of assembly, homodimer.

The protein resides in the mitochondrion matrix. It carries out the reaction L-glutamate 5-semialdehyde + NAD(+) + H2O = L-glutamate + NADH + 2 H(+). Its pathway is amino-acid degradation; L-proline degradation into L-glutamate; L-glutamate from L-proline: step 2/2. In terms of biological role, irreversible conversion of delta-1-pyrroline-5-carboxylate (P5C), derived either from proline or ornithine, to glutamate. This is a necessary step in the pathway interconnecting the urea and tricarboxylic acid cycles. The preferred substrate is glutamic gamma-semialdehyde, other substrates include succinic, glutaric and adipic semialdehydes. This chain is Delta-1-pyrroline-5-carboxylate dehydrogenase, mitochondrial (ALDH4A1), found in Bos taurus (Bovine).